Reading from the N-terminus, the 305-residue chain is Probable lipid kinase YegS-like (305 aa).

The region spanning 1 to 129 (MTQRRAMLIL…VDLGEVGGKL (129 aa)) is the DAGKc domain. ATP is bound by residues T39, 65–71 (GDGTLRD), and T92. 3 residues coordinate Mg(2+): L210, D213, and L215. The active-site Proton acceptor is the E268.

This sequence belongs to the diacylglycerol/lipid kinase family. YegS lipid kinase subfamily. It depends on Mg(2+) as a cofactor. Ca(2+) is required as a cofactor.

Its subcellular location is the cytoplasm. Its function is as follows. Probably phosphorylates lipids; the in vivo substrate is unknown. This Pseudomonas syringae pv. tomato (strain ATCC BAA-871 / DC3000) protein is Probable lipid kinase YegS-like.